The chain runs to 511 residues: Probable mannosyl-oligosaccharide alpha-1,2-mannosidase 1B (511 aa).

An N-terminal signal peptide occupies residues 1 to 18 (MHLPSLSLAWALAGSSLA). Residues Asn-90 and Asn-177 are each glycosylated (N-linked (GlcNAc...) asparagine). Cys-327 and Cys-356 are disulfide-bonded. Residue Glu-370 is the Proton donor of the active site. Asn-433 carries N-linked (GlcNAc...) asparagine glycosylation. Position 501 (Thr-501) interacts with Ca(2+).

The protein belongs to the glycosyl hydrolase 47 family. Monomer. Ca(2+) is required as a cofactor. It depends on Mg(2+) as a cofactor.

It is found in the cytoplasmic vesicle lumen. It carries out the reaction N(4)-(alpha-D-Man-(1-&gt;2)-alpha-D-Man-(1-&gt;2)-alpha-D-Man-(1-&gt;3)-[alpha-D-Man-(1-&gt;2)-alpha-D-Man-(1-&gt;3)-[alpha-D-Man-(1-&gt;2)-alpha-D-Man-(1-&gt;6)]-alpha-D-Man-(1-&gt;6)]-beta-D-Man-(1-&gt;4)-beta-D-GlcNAc-(1-&gt;4)-beta-D-GlcNAc)-L-asparaginyl-[protein] (N-glucan mannose isomer 9A1,2,3B1,2,3) + 4 H2O = N(4)-(alpha-D-Man-(1-&gt;3)-[alpha-D-Man-(1-&gt;3)-[alpha-D-Man-(1-&gt;6)]-alpha-D-Man-(1-&gt;6)]-beta-D-Man-(1-&gt;4)-beta-D-GlcNAc-(1-&gt;4)-beta-D-GlcNAc)-L-asparaginyl-[protein] (N-glucan mannose isomer 5A1,2) + 4 beta-D-mannose. It catalyses the reaction N(4)-(alpha-D-Man-(1-&gt;2)-alpha-D-Man-(1-&gt;2)-alpha-D-Man-(1-&gt;3)-[alpha-D-Man-(1-&gt;3)-[alpha-D-Man-(1-&gt;2)-alpha-D-Man-(1-&gt;6)]-alpha-D-Man-(1-&gt;6)]-beta-D-Man-(1-&gt;4)-beta-D-GlcNAc-(1-&gt;4)-beta-D-GlcNAc)-L-asparaginyl-[protein] (N-glucan mannose isomer 8A1,2,3B1,3) + 3 H2O = N(4)-(alpha-D-Man-(1-&gt;3)-[alpha-D-Man-(1-&gt;3)-[alpha-D-Man-(1-&gt;6)]-alpha-D-Man-(1-&gt;6)]-beta-D-Man-(1-&gt;4)-beta-D-GlcNAc-(1-&gt;4)-beta-D-GlcNAc)-L-asparaginyl-[protein] (N-glucan mannose isomer 5A1,2) + 3 beta-D-mannose. It functions in the pathway protein modification; protein glycosylation. Involved in the maturation of Asn-linked oligosaccharides. Progressively trims alpha-1,2-linked mannose residues from Man(9)GlcNAc(2) to produce Man(5)GlcNAc(2). The protein is Probable mannosyl-oligosaccharide alpha-1,2-mannosidase 1B (mns1B) of Aspergillus clavatus (strain ATCC 1007 / CBS 513.65 / DSM 816 / NCTC 3887 / NRRL 1 / QM 1276 / 107).